The following is a 691-amino-acid chain: Elongation factor G (691 aa).

Residues 8–282 (ERVRNIGIAA…AVVDYLPAPI (275 aa)) form the tr-type G domain. GTP-binding positions include 17–24 (AHIDAGKT), 81–85 (DTPGH), and 135–138 (NKMD).

Belongs to the TRAFAC class translation factor GTPase superfamily. Classic translation factor GTPase family. EF-G/EF-2 subfamily.

The protein resides in the cytoplasm. Catalyzes the GTP-dependent ribosomal translocation step during translation elongation. During this step, the ribosome changes from the pre-translocational (PRE) to the post-translocational (POST) state as the newly formed A-site-bound peptidyl-tRNA and P-site-bound deacylated tRNA move to the P and E sites, respectively. Catalyzes the coordinated movement of the two tRNA molecules, the mRNA and conformational changes in the ribosome. In Synechococcus sp. (strain CC9311), this protein is Elongation factor G.